A 282-amino-acid polypeptide reads, in one-letter code: Dihydroorotate dehydrogenase B (NAD(+)), electron transfer subunit homolog (282 aa).

Positions 2–100 (GGTALNEIVK…VGPLGNPSEI (99 aa)) constitute an FAD-binding FR-type domain. C225, C228, and C240 together coordinate [2Fe-2S] cluster.

The protein belongs to the PyrK family. It depends on [2Fe-2S] cluster as a cofactor. FAD serves as cofactor.

This is Dihydroorotate dehydrogenase B (NAD(+)), electron transfer subunit homolog from Thermotoga maritima (strain ATCC 43589 / DSM 3109 / JCM 10099 / NBRC 100826 / MSB8).